We begin with the raw amino-acid sequence, 330 residues long: Elongation factor Ts (330 aa).

Residues 79–82 form an involved in Mg(2+) ion dislocation from EF-Tu region; it reads TDFV.

The protein belongs to the EF-Ts family.

It is found in the cytoplasm. Functionally, associates with the EF-Tu.GDP complex and induces the exchange of GDP to GTP. It remains bound to the aminoacyl-tRNA.EF-Tu.GTP complex up to the GTP hydrolysis stage on the ribosome. This is Elongation factor Ts from Bacteroides fragilis (strain ATCC 25285 / DSM 2151 / CCUG 4856 / JCM 11019 / LMG 10263 / NCTC 9343 / Onslow / VPI 2553 / EN-2).